The chain runs to 251 residues: Large ribosomal subunit protein uL2 (251 aa).

Positions 1 to 12 (MGKRLRVQRHGR) are enriched in basic residues. Positions 1 to 22 (MGKRLRVQRHGRGTPQWRNRGH) are disordered.

Belongs to the universal ribosomal protein uL2 family. In terms of assembly, part of the 50S ribosomal subunit. Forms a bridge to the 30S subunit in the 70S ribosome.

In terms of biological role, one of the primary rRNA binding proteins. Required for association of the 30S and 50S subunits to form the 70S ribosome, for tRNA binding and peptide bond formation. It has been suggested to have peptidyltransferase activity; this is somewhat controversial. Makes several contacts with the 16S rRNA in the 70S ribosome. The chain is Large ribosomal subunit protein uL2 from Ignicoccus hospitalis (strain KIN4/I / DSM 18386 / JCM 14125).